Here is a 493-residue protein sequence, read N- to C-terminus: Solute carrier family 2, facilitated glucose transporter member 3 (493 aa).

Over 1–10 (MGTTKVTPSL) the chain is Cytoplasmic. A helical transmembrane segment spans residues 11–32 (VFAVTVATIGSFQFGYNTGVIN). Over 33-64 (APETILKDFLNYTLEERLEDLPSEGLLTALWS) the chain is Extracellular. Asn43 carries N-linked (GlcNAc...) asparagine glycosylation. Residues 65 to 85 (LCVAIFSVGGMIGSFSVGLFV) traverse the membrane as a helical segment. The Cytoplasmic segment spans residues 86-90 (NRFGR). The chain crosses the membrane as a helical span at residues 91–111 (RNSMLLVNLLAIIAGCLMGFA). At 112 to 118 (KIAESVE) the chain is on the extracellular side. The chain crosses the membrane as a helical span at residues 119 to 142 (MLILGRLLIGIFCGLCTGFVPMYI). Residues 143–153 (GEVSPTALRGA) are Cytoplasmic-facing. Residues 154–174 (FGTLNQLGIVVGILVAQIFGL) traverse the membrane as a helical segment. Gln159 is a D-glucose binding site. The Extracellular portion of the chain corresponds to 175-183 (DFILGSEEL). A helical transmembrane segment spans residues 184–204 (WPGLLGLTIIPAILQSAALPF). Residues 205 to 269 (CPESPRFLLI…LFRSPNYVQP (65 aa)) are Cytoplasmic-facing. Position 232 is a phosphothreonine (Thr232). Residues 270 to 290 (LLISIVLQLSQQLSGINAVFY) traverse the membrane as a helical segment. The important for selectivity against fructose stretch occupies residues 277-279 (QLS). Residues 280–281 (QQ) and Asn286 contribute to the D-glucose site. The Extracellular portion of the chain corresponds to 291-304 (YSTGIFKDAGVQEP). Residues 305–325 (IYATIGAGVVNTIFTVVSLFL) form a helical membrane-spanning segment. Asn315 is a binding site for D-glucose. The Cytoplasmic segment spans residues 326 to 331 (VERAGR). A helical membrane pass occupies residues 332 to 352 (RTLHMIGLGGMAVCSVFMTIS). The Extracellular segment spans residues 353–363 (LLLKDDYEAMS). The chain crosses the membrane as a helical span at residues 364-389 (FVCIVAILIYVAFFEIGPGPIPWFIV). Positions 378 and 386 each coordinate D-glucose. Residues 390 to 399 (AELFSQGPRP) are Cytoplasmic-facing. The helical transmembrane segment at 400–420 (AAIAVAGCCNWTSNFLVGMLF) threads the bilayer. The Extracellular portion of the chain corresponds to 421 to 429 (PSAAAYLGA). A helical transmembrane segment spans residues 430–450 (YVFIIFAAFLIFFLIFTFFKV). The Cytoplasmic segment spans residues 451 to 493 (PETKGRTFEDIARAFEGQAHSGKGPAGVELNSMQPVKETPGNA). Positions 469–493 (AHSGKGPAGVELNSMQPVKETPGNA) are disordered. Ser471 and Ser482 each carry phosphoserine. A Phosphothreonine modification is found at Thr489.

This sequence belongs to the major facilitator superfamily. Sugar transporter (TC 2.A.1.1) family. Glucose transporter subfamily. In terms of assembly, interacts with SMIM43; the interaction may promote SLC2A3-mediated glucose transport to meet the energy needs of mesendoderm differentiation. In terms of tissue distribution, expressed in spermatozoa (at protein level). Detected in brain (at protein level). Abundantly expressed in the hippocampus, cerebellum and cerebral cortex with lower expression in the dentate gyrus and piriform cortex.

The protein localises to the cell membrane. The protein resides in the perikaryon. It is found in the cell projection. The enzyme catalyses D-glucose(out) = D-glucose(in). The catalysed reaction is D-galactose(in) = D-galactose(out). Deoxyglucose transport is inhibited by D-glucose, D-galactose and maltose. Galactose transport is inhibited by D-glucose and maltose. Its function is as follows. Facilitative glucose transporter. Can also mediate the uptake of various other monosaccharides across the cell membrane. Mediates the uptake of glucose, 2-deoxyglucose, galactose, mannose, xylose and fucose, and probably also dehydroascorbate. Does not mediate fructose transport. Required for mesendoderm differentiation. The chain is Solute carrier family 2, facilitated glucose transporter member 3 from Mus musculus (Mouse).